We begin with the raw amino-acid sequence, 476 residues long: UDP-N-acetylmuramate--L-alanine ligase (476 aa).

112-118 (GTHGKTT) contributes to the ATP binding site.

Belongs to the MurCDEF family.

The protein resides in the cytoplasm. The catalysed reaction is UDP-N-acetyl-alpha-D-muramate + L-alanine + ATP = UDP-N-acetyl-alpha-D-muramoyl-L-alanine + ADP + phosphate + H(+). The protein operates within cell wall biogenesis; peptidoglycan biosynthesis. Its function is as follows. Cell wall formation. The chain is UDP-N-acetylmuramate--L-alanine ligase from Magnetococcus marinus (strain ATCC BAA-1437 / JCM 17883 / MC-1).